Consider the following 153-residue polypeptide: MQCPYCNADDTKVIDSRLAAEGAQVRRRRQCNQCQERFTTFEVVEVVMPRIIKSNGRIEPYDSQKLKRSIQLPLQKRPVTLDEQEAMISRIEKRIRQLGEREISSKGLGEVVMSELKELDDVAYVRFASVYRDFQDIEAFRQELQNIRPVDEQ.

A zinc finger spans residues 3-34 (CPYCNADDTKVIDSRLAAEGAQVRRRRQCNQC). Residues 49-139 (PRIIKSNGRI…VYRDFQDIEA (91 aa)) form the ATP-cone domain.

It belongs to the NrdR family. Zn(2+) is required as a cofactor.

In terms of biological role, negatively regulates transcription of bacterial ribonucleotide reductase nrd genes and operons by binding to NrdR-boxes. The chain is Transcriptional repressor NrdR from Psychrobacter sp. (strain PRwf-1).